Consider the following 451-residue polypeptide: Tubulin alpha-1 chain (451 aa).

Gln11 serves as a coordination point for GTP. Lys40 carries the N6-acetyllysine modification. GTP-binding residues include Glu71, Gly144, Thr145, Thr179, Asn206, and Asn228. Glu71 serves as a coordination point for Mg(2+). Glu254 is an active-site residue. A disordered region spans residues 432-451; sequence YEEVGADSAEGDEEDEGDEY.

It belongs to the tubulin family. In terms of assembly, dimer of alpha and beta chains. A typical microtubule is a hollow water-filled tube with an outer diameter of 25 nm and an inner diameter of 15 nM. Alpha-beta heterodimers associate head-to-tail to form protofilaments running lengthwise along the microtubule wall with the beta-tubulin subunit facing the microtubule plus end conferring a structural polarity. Microtubules usually have 13 protofilaments but different protofilament numbers can be found in some organisms and specialized cells. It depends on Mg(2+) as a cofactor. Post-translationally, undergoes a tyrosination/detyrosination cycle, the cyclic removal and re-addition of a C-terminal tyrosine residue by the enzymes tubulin tyrosine carboxypeptidase (TTCP) and tubulin tyrosine ligase (TTL), respectively. In terms of processing, acetylation of alpha chains at Lys-40 stabilizes microtubules and affects affinity and processivity of microtubule motors. This modification has a role in multiple cellular functions, ranging from cell motility, cell cycle progression or cell differentiation to intracellular trafficking and signaling.

The protein resides in the cytoplasm. It localises to the cytoskeleton. It catalyses the reaction GTP + H2O = GDP + phosphate + H(+). In terms of biological role, tubulin is the major constituent of microtubules, a cylinder consisting of laterally associated linear protofilaments composed of alpha- and beta-tubulin heterodimers. Microtubules grow by the addition of GTP-tubulin dimers to the microtubule end, where a stabilizing cap forms. Below the cap, tubulin dimers are in GDP-bound state, owing to GTPase activity of alpha-tubulin. This is Tubulin alpha-1 chain from Gossypium hirsutum (Upland cotton).